Reading from the N-terminus, the 180-residue chain is Large ribosomal subunit protein uL6 (180 aa).

Belongs to the universal ribosomal protein uL6 family. Part of the 50S ribosomal subunit.

In terms of biological role, this protein binds to the 23S rRNA, and is important in its secondary structure. It is located near the subunit interface in the base of the L7/L12 stalk, and near the tRNA binding site of the peptidyltransferase center. The polypeptide is Large ribosomal subunit protein uL6 (Anaeromyxobacter sp. (strain Fw109-5)).